Here is a 313-residue protein sequence, read N- to C-terminus: Ribosomal RNA small subunit methyltransferase H (313 aa).

S-adenosyl-L-methionine is bound by residues G34–H36, D54, F81, D102, and Q109. The segment at I289–G313 is disordered.

This sequence belongs to the methyltransferase superfamily. RsmH family.

The protein localises to the cytoplasm. The catalysed reaction is cytidine(1402) in 16S rRNA + S-adenosyl-L-methionine = N(4)-methylcytidine(1402) in 16S rRNA + S-adenosyl-L-homocysteine + H(+). Its function is as follows. Specifically methylates the N4 position of cytidine in position 1402 (C1402) of 16S rRNA. The chain is Ribosomal RNA small subunit methyltransferase H from Trichlorobacter lovleyi (strain ATCC BAA-1151 / DSM 17278 / SZ) (Geobacter lovleyi).